The chain runs to 237 residues: Class B acid phosphatase (237 aa).

Positions 1–23 are cleaved as a signal peptide; it reads MKKITLALSAVCLLFTLNHSANA. Asp69 acts as the Nucleophile in catalysis. The Mg(2+) site is built by Asp69 and Asp71. The Proton donor role is filled by Asp71. Residues 137–138 and Lys177 each bind substrate; that span reads TG. Asp192 contributes to the Mg(2+) binding site.

It belongs to the class B bacterial acid phosphatase family. Homotetramer. The cofactor is Mg(2+).

Its subcellular location is the periplasm. It catalyses the reaction a phosphate monoester + H2O = an alcohol + phosphate. Dephosphorylates several organic phosphate monoesters. Also has a phosphotransferase activity catalyzing the transfer of low-energy phosphate groups from organic phosphate monoesters to free hydroxyl groups of various organic compounds. The sequence is that of Class B acid phosphatase from Salmonella arizonae (strain ATCC BAA-731 / CDC346-86 / RSK2980).